We begin with the raw amino-acid sequence, 606 residues long: Pickpocket protein 28 (606 aa).

The disordered stretch occupies residues 1 to 26; it reads MRTLTESRRRQSGSSGCKKDSESDDD. The next 2 membrane-spanning stretches (helical) occupy residues 66-86 and 490-510; these read IFFG…ISNV and GLLG…FFYI.

Belongs to the amiloride-sensitive sodium channel (TC 1.A.6) family. Expressed in water-sensing neurons in taste bristles on the proboscis but not in carbonation-sensing taste peg neurons (at protein level). Expressed in the tracheal system.

It localises to the cell membrane. Functionally, osmosensitive ion channel that mediates the cellular and behavioral response to water. Plays an essential role in gustatory water reception. Part of a complex that plays a role in tracheal liquid clearance. Probable role in sodium transport. This Drosophila melanogaster (Fruit fly) protein is Pickpocket protein 28 (ppk28).